The following is a 111-amino-acid chain: Small ribosomal subunit protein uS15c (111 aa).

It belongs to the universal ribosomal protein uS15 family. In terms of assembly, part of the 30S ribosomal subunit.

Its subcellular location is the plastid. The protein resides in the chloroplast. The protein is Small ribosomal subunit protein uS15c (rps15) of Staurastrum punctulatum (Green alga).